Consider the following 1076-residue polypeptide: Nickel-cobalt-cadmium resistance protein NccA (1076 aa).

Transmembrane regions (helical) follow at residues Trp14–Leu34, Val367–Gly387, Ala391–Asn411, Leu419–Glu439, Thr476–Val496, Pro503–Val523, Met562–Val582, Leu904–Gly924, Thr929–Leu949, Val960–Ile980, Pro1004–Gly1024, and Val1036–Cys1056.

This sequence belongs to the resistance-nodulation-cell division (RND) (TC 2.A.6) family.

It localises to the cell membrane. In terms of biological role, component of the NCC cation-efflux system that confers resistance to nickel, cobalt and cadmium. May form a membrane tunnel, which allows ion transport across the membrane. This chain is Nickel-cobalt-cadmium resistance protein NccA (nccA), found in Alcaligenes xylosoxydans xylosoxydans (Achromobacter xylosoxidans).